The following is a 252-amino-acid chain: MVRIGLLGCGNVGRIIATHQDGFTVEALFDRLPDHAEELARMCGAPAYADFQEFISQDFDICVEAASVLAVREYAPKILENGKHVLILSVGALSDTNFRKILLDVARSQGKKIHIPSGAIMGLDNLKVGGISRIDSVLLRTTKSPASLGMQVSHRTLAFRGKANECIKQFPKNINVSVALALAVHHDVDVELWADPEVDRNIHDIFVSGEFGEASIRVVNHPSPDNPATSYLAALSVLSLLKNLDSPLVIGS.

Alanine 119 and asparagine 175 together coordinate NAD(+). The active site involves histidine 203.

It belongs to the L-aspartate dehydrogenase family.

It carries out the reaction L-aspartate + NADP(+) + H2O = oxaloacetate + NH4(+) + NADPH + H(+). The catalysed reaction is L-aspartate + NAD(+) + H2O = oxaloacetate + NH4(+) + NADH + H(+). It functions in the pathway cofactor biosynthesis; NAD(+) biosynthesis; iminoaspartate from L-aspartate (dehydrogenase route): step 1/1. Specifically catalyzes the NAD or NADP-dependent dehydrogenation of L-aspartate to iminoaspartate. The polypeptide is L-aspartate dehydrogenase (Methanospirillum hungatei JF-1 (strain ATCC 27890 / DSM 864 / NBRC 100397 / JF-1)).